A 203-amino-acid chain; its full sequence is MKGKFISFEGIDGCGKTTQIKFLEEYLLKQGYNILVLREPGGTKVGEKVRDILLDKNNFISPVTEMLLYASSRAQLVEEKILPAIEEGKIVLLDRFVDSSYVYQGYARGLGIEKVKVVNEIATMGILPDVTIYIDITPEEAMKRRGKREADRLERESWDFHKKVREGYIKLVKEFPKRFVFIDGMQELMKVHKDIIDVVKKYL.

Residue 10-17 (GIDGCGKT) coordinates ATP.

Belongs to the thymidylate kinase family.

The enzyme catalyses dTMP + ATP = dTDP + ADP. Its function is as follows. Phosphorylation of dTMP to form dTDP in both de novo and salvage pathways of dTTP synthesis. This chain is Thymidylate kinase, found in Thermoanaerobacter pseudethanolicus (strain ATCC 33223 / 39E) (Clostridium thermohydrosulfuricum).